A 218-amino-acid chain; its full sequence is Protein-L-isoaspartate O-methyltransferase (218 aa).

Residue serine 60 is part of the active site.

This sequence belongs to the methyltransferase superfamily. L-isoaspartyl/D-aspartyl protein methyltransferase family.

Its subcellular location is the cytoplasm. The enzyme catalyses [protein]-L-isoaspartate + S-adenosyl-L-methionine = [protein]-L-isoaspartate alpha-methyl ester + S-adenosyl-L-homocysteine. Functionally, catalyzes the methyl esterification of L-isoaspartyl residues in peptides and proteins that result from spontaneous decomposition of normal L-aspartyl and L-asparaginyl residues. It plays a role in the repair and/or degradation of damaged proteins. In Roseiflexus sp. (strain RS-1), this protein is Protein-L-isoaspartate O-methyltransferase.